The sequence spans 135 residues: Protein NrdI (135 aa).

This sequence belongs to the NrdI family.

In terms of biological role, probably involved in ribonucleotide reductase function. The chain is Protein NrdI from Rhizobium johnstonii (strain DSM 114642 / LMG 32736 / 3841) (Rhizobium leguminosarum bv. viciae).